Here is a 611-residue protein sequence, read N- to C-terminus: Dihydroxy-acid dehydratase (611 aa).

Aspartate 81 is a binding site for Mg(2+). [2Fe-2S] cluster is bound at residue cysteine 122. Residues aspartate 123 and lysine 124 each coordinate Mg(2+). An N6-carboxylysine modification is found at lysine 124. Cysteine 195 serves as a coordination point for [2Fe-2S] cluster. Mg(2+) is bound at residue glutamate 491. The active-site Proton acceptor is the serine 517.

This sequence belongs to the IlvD/Edd family. As to quaternary structure, homodimer. The cofactor is [2Fe-2S] cluster. Mg(2+) is required as a cofactor.

It carries out the reaction (2R)-2,3-dihydroxy-3-methylbutanoate = 3-methyl-2-oxobutanoate + H2O. It catalyses the reaction (2R,3R)-2,3-dihydroxy-3-methylpentanoate = (S)-3-methyl-2-oxopentanoate + H2O. Its pathway is amino-acid biosynthesis; L-isoleucine biosynthesis; L-isoleucine from 2-oxobutanoate: step 3/4. It functions in the pathway amino-acid biosynthesis; L-valine biosynthesis; L-valine from pyruvate: step 3/4. Its function is as follows. Functions in the biosynthesis of branched-chain amino acids. Catalyzes the dehydration of (2R,3R)-2,3-dihydroxy-3-methylpentanoate (2,3-dihydroxy-3-methylvalerate) into 2-oxo-3-methylpentanoate (2-oxo-3-methylvalerate) and of (2R)-2,3-dihydroxy-3-methylbutanoate (2,3-dihydroxyisovalerate) into 2-oxo-3-methylbutanoate (2-oxoisovalerate), the penultimate precursor to L-isoleucine and L-valine, respectively. The polypeptide is Dihydroxy-acid dehydratase (Histophilus somni (strain 2336) (Haemophilus somnus)).